We begin with the raw amino-acid sequence, 729 residues long: Glycerophosphodiester phosphodiesterase GDPDL5 (729 aa).

Positions 1-22 (MACPRVIFLILITFFILQTAFS) are cleaved as a signal peptide. 2 GP-PDE domains span residues 33-320 (PAVI…YRAI) and 337-645 (ITII…ARYR). N-linked (GlcNAc...) asparagine glycosylation is found at N88, N162, N218, N227, N285, N302, N390, N401, and N507. A helical membrane pass occupies residues 709–729 (AIEVPFAFIAMAILVCFFISV).

It belongs to the glycerophosphoryl diester phosphodiesterase family. As to expression, expressed in stems, flowers and siliques.

Its subcellular location is the membrane. The enzyme catalyses a sn-glycero-3-phosphodiester + H2O = an alcohol + sn-glycerol 3-phosphate + H(+). This chain is Glycerophosphodiester phosphodiesterase GDPDL5, found in Arabidopsis thaliana (Mouse-ear cress).